Consider the following 156-residue polypeptide: Small ribosomal subunit protein uS7 (156 aa).

This sequence belongs to the universal ribosomal protein uS7 family. Part of the 30S ribosomal subunit. Contacts proteins S9 and S11.

In terms of biological role, one of the primary rRNA binding proteins, it binds directly to 16S rRNA where it nucleates assembly of the head domain of the 30S subunit. Is located at the subunit interface close to the decoding center, probably blocks exit of the E-site tRNA. In Arthrospira platensis (Spirulina platensis), this protein is Small ribosomal subunit protein uS7.